A 118-amino-acid polypeptide reads, in one-letter code: Protein TusC (118 aa).

It belongs to the DsrF/TusC family. In terms of assembly, heterohexamer, formed by a dimer of trimers. The hexameric TusBCD complex contains 2 copies each of TusB, TusC and TusD. The TusBCD complex interacts with TusE.

It localises to the cytoplasm. Functionally, part of a sulfur-relay system required for 2-thiolation of 5-methylaminomethyl-2-thiouridine (mnm(5)s(2)U) at tRNA wobble positions. This chain is Protein TusC, found in Salmonella gallinarum (strain 287/91 / NCTC 13346).